A 197-amino-acid chain; its full sequence is Transmembrane 4 L6 family member 5 (197 aa).

Over methionine 1 to cysteine 9 the chain is Cytoplasmic. Residues valine 10–valine 30 form a helical membrane-spanning segment. At proline 31–glutamine 46 the chain is on the extracellular side. A helical transmembrane segment spans residues valine 47–alanine 67. The Cytoplasmic segment spans residues valine 68 to serine 90. The chain crosses the membrane as a helical span at residues valine 91–glycine 111. An interaction with MTOR and CASTOR1 region spans residues valine 91–histidine 197. Topologically, residues leucine 112 to threonine 157 are extracellular. An L-arginine-binding site is contributed by tryptophan 124–glutamate 129. N-linked (GlcNAc...) asparagine glycans are attached at residues asparagine 138 and asparagine 155. A helical membrane pass occupies residues leucine 158–valine 178. Topologically, residues asparagine 179–histidine 197 are cytoplasmic.

It belongs to the L6 tetraspanin family. As to quaternary structure, interacts with MTOR; the interaction is positively regulated by arginine and is negatively regulated by leucine. Interacts with SLC38A9. Interacts with SLC7A1; the interaction is negatively regulated by arginine. Interacts with CASTOR1; the interaction is positively regulated by leucine and is negatively regulated by arginine. As to expression, intestine. Overexpressed in pancreatic cancers.

The protein resides in the lysosome membrane. The protein localises to the cell membrane. In terms of biological role, acts as a lysosomal membrane arginine sensor. Forms a complex with MTOR and SLC38A9 on lysosomal membranes in an arginine-regulated manner, leading to arginine efflux which enables the activation of mTORC1 which subsequently leads to RPS6KB1 and EIF4EBP1 phosphorylations. Facilitates cell cycle G1/S phase progression and the translocation of the CDK4-CCND1 complex into the nucleus. CDKN1B and RHOA/ROCK signaling activity are involved in TM4SF5-mediated acceleration of G1/S phase progression. The polypeptide is Transmembrane 4 L6 family member 5 (TM4SF5) (Homo sapiens (Human)).